The primary structure comprises 710 residues: F-box/WD repeat-containing protein 7 (710 aa).

A disordered region spans residues Met1–His158. Ser26 is subject to Phosphoserine. The span at Arg46–Arg55 shows a compositional bias: basic and acidic residues. Positions Gln69–Phe84 are enriched in polar residues. Over residues Val87 to Asp132 the composition is skewed to acidic residues. Basic and acidic residues predominate over residues Asp133 to His142. Residues Asn143–His158 show a composition bias toward polar residues. At Thr208 the chain carries Phosphothreonine. The residue at position 230 (Ser230) is a Phosphoserine; by SGK1. In terms of domain architecture, F-box spans Arg281 to Lys327. WD repeat units lie at residues Gly381 to Val421, His423 to Thr459, Gly462 to Met501, His503 to Thr539, Gly542 to Thr581, His583 to Gln621, and Lys625 to Asn662.

As to quaternary structure, homodimer; homodimerization plays a role in substrate binding and/or ubiquitination and degradation. Component of the SCF(FBXW7) complex consisting of CUL1, RBX1, SKP1 and FBXW7. Interacts (via F-box domain) with SKP1. Interacts (via F-box domain) with pseudophosphatase STYX; the interaction is direct and prevents FBXW7 interaction with SKP1. Interacts with cyclin-E (CCNE1 or CCNE2). Interacts with PSEN1. Forms a trimeric complex with NOTCH1 and SGK1. Interacts with NOTCH1 intracellular domain/NICD and NOTCH4 intracellular domain/NICD. Interacts with NOTCH2 intracellular domain (N2ICD). Interacts with MYC (when phosphorylated). Interacts with USP28, counteracting ubiquitination of MYC. Interacts (when phosphorylated at Thr-208) with PIN1, disrupting FBXW7 dimerization and promoting FBXW7 autoubiquitination and degradation. Interacts with UBE2QL1. Interacts with FAM83D; promotes FBXW7 degradation. Interacts with MYCN; FBXW7 competes with AURKA for binding to unphosphorylated MYCN but not for binding to phosphorylated MYCN. Interacts with JUN. Found in a complex with JUN and PRR7. Interacts with JUN and PRR7; the interaction inhibits ubiquitination-mediated JUN degradation, promoting its phosphorylation and transcriptional activity. Interacts with NFE2L1. Interacts with NR1D1. Interacts with RICTOR; mediates RICTOR ubiquitination and degradation. Interacts with USP38, counteracting ubiquitination of MYC. In terms of processing, phosphorylation at Thr-208 promotes interaction with PIN1, leading to disrupt FBXW7 dimerization and promoting FBXW7 autoubiquitination and degradation. Phosphorylated by ATM at Ser-26 in response to DNA damage, promoting recruitment to DNA damage sites and 'Lys-63'-linked ubiquitination of phosphorylated XRCC4. Ubiquitinated: autoubiquitinates following phosphorylation at Thr-208 and subsequent interaction with PIN1. Ubiquitination leads to its proteasomal degradation. In terms of tissue distribution, widely expressed with highest levels in brain, heart and testis.

The protein resides in the nucleus. Its subcellular location is the nucleoplasm. The protein localises to the chromosome. Its pathway is protein modification; protein ubiquitination. Functionally, substrate recognition component of a SCF (SKP1-CUL1-F-box protein) E3 ubiquitin-protein ligase complex which mediates the ubiquitination and subsequent proteasomal degradation of target proteins. Recognizes and binds phosphorylated sites/phosphodegrons within target proteins and thereafter brings them to the SCF complex for ubiquitination. Mediates ubiquitination and subsequent degradation of CCNE1 and MYC. Identified substrates include cyclin-E (CCNE1 or CCNE2), DISC1, JUN, MYC, NOTCH1 released notch intracellular domain (NICD), NOTCH2, MCL1, MLST8, RICTOR and probably PSEN1. Acts as a negative regulator of JNK signaling by binding to phosphorylated JUN and promoting its ubiquitination and subsequent degradation. SCF(FBXW7) complex mediates the ubiquitination and subsequent degradation of NFE2L1. Involved in bone homeostasis and negative regulation of osteoclast differentiation. Regulates the amplitude of the cyclic expression of hepatic core clock genes and genes involved in lipid and glucose metabolism via ubiquitination and proteasomal degradation of their transcriptional repressor NR1D1; CDK1-dependent phosphorylation of NR1D1 is necessary for SCF(FBXW7)-mediated ubiquitination. Also able to promote 'Lys-63'-linked ubiquitination in response to DNA damage. The SCF(FBXW7) complex facilitates double-strand break repair following phosphorylation by ATM: phosphorylation promotes localization to sites of double-strand breaks and 'Lys-63'-linked ubiquitination of phosphorylated XRCC4, enhancing DNA non-homologous end joining. The chain is F-box/WD repeat-containing protein 7 from Mus musculus (Mouse).